The primary structure comprises 328 residues: RING finger protein 175 (328 aa).

Helical transmembrane passes span M51 to V71, L83 to W103, R104 to F121, A149 to F169, and G180 to I200. The RING-type; atypical zinc finger occupies C227 to K277.

It localises to the membrane. This chain is RING finger protein 175 (RNF175), found in Homo sapiens (Human).